The primary structure comprises 62 residues: Large ribosomal subunit protein bL33 (62 aa).

The protein belongs to the bacterial ribosomal protein bL33 family.

This is Large ribosomal subunit protein bL33 from Parabacteroides distasonis (strain ATCC 8503 / DSM 20701 / CIP 104284 / JCM 5825 / NCTC 11152).